We begin with the raw amino-acid sequence, 254 residues long: MRVGIALSGDVPGAAERVLEAVERADVDVVVYHNVELDADVEEVRAKDPGRALVEDLVEGRLDAAVRGAVSGRCVRELVDALDLPFTGRSTVLEAEGRRVLLAPVGIDEGWEVESLVKLGELAARFHRRLTRREPSVAVVSSGRLEDFGRRSEIDRWLADGELVARLLKERGMEVEHVGILVEEALERDVVLFVNGVLGNLTFRCLSLVAGFRSHGAPVLAALERGVVFVDTSRAQRASGYARALRLAAELAGG.

The protein belongs to the MtxX family.

This is an uncharacterized protein from Methanopyrus kandleri (strain AV19 / DSM 6324 / JCM 9639 / NBRC 100938).